We begin with the raw amino-acid sequence, 117 residues long: Immunoglobulin kappa variable 1D-43 (117 aa).

A signal peptide spans 1 to 22 (MDMRVPAQRLGLLLLWFPGARC). A framework-1 region spans residues 23–45 (AIRMTQSPFSLSASVGDRVTITC). The 95-residue stretch at 23–117 (AIRMTQSPFS…YYCQQYYSTP (95 aa)) folds into the Ig-like domain. A disulfide bond links Cys45 and Cys110. The complementarity-determining-1 stretch occupies residues 46–56 (WASQGISSYLA). Residues 57–71 (WYQQKPAKAPKLFIY) form a framework-2 region. Residues 72 to 78 (YASSLQS) form a complementarity-determining-2 region. The interval 79 to 110 (GVPSRFSGSGSGTDYTLTISSLQPEDFATYYC) is framework-3. The tract at residues 111 to 117 (QQYYSTP) is complementarity-determining-3.

Immunoglobulins are composed of two identical heavy chains and two identical light chains; disulfide-linked.

The protein resides in the secreted. Its subcellular location is the cell membrane. Its function is as follows. V region of the variable domain of immunoglobulin light chains that participates in the antigen recognition. Immunoglobulins, also known as antibodies, are membrane-bound or secreted glycoproteins produced by B lymphocytes. In the recognition phase of humoral immunity, the membrane-bound immunoglobulins serve as receptors which, upon binding of a specific antigen, trigger the clonal expansion and differentiation of B lymphocytes into immunoglobulins-secreting plasma cells. Secreted immunoglobulins mediate the effector phase of humoral immunity, which results in the elimination of bound antigens. The antigen binding site is formed by the variable domain of one heavy chain, together with that of its associated light chain. Thus, each immunoglobulin has two antigen binding sites with remarkable affinity for a particular antigen. The variable domains are assembled by a process called V-(D)-J rearrangement and can then be subjected to somatic hypermutations which, after exposure to antigen and selection, allow affinity maturation for a particular antigen. The sequence is that of Immunoglobulin kappa variable 1D-43 from Homo sapiens (Human).